A 236-amino-acid polypeptide reads, in one-letter code: 1-(5-phosphoribosyl)-5-[(5-phosphoribosylamino)methylideneamino] imidazole-4-carboxamide isomerase (236 aa).

Residue Asp8 is the Proton acceptor of the active site. The active-site Proton donor is the Asp127.

It belongs to the HisA/HisF family.

The protein localises to the cytoplasm. The catalysed reaction is 1-(5-phospho-beta-D-ribosyl)-5-[(5-phospho-beta-D-ribosylamino)methylideneamino]imidazole-4-carboxamide = 5-[(5-phospho-1-deoxy-D-ribulos-1-ylimino)methylamino]-1-(5-phospho-beta-D-ribosyl)imidazole-4-carboxamide. The protein operates within amino-acid biosynthesis; L-histidine biosynthesis; L-histidine from 5-phospho-alpha-D-ribose 1-diphosphate: step 4/9. The sequence is that of 1-(5-phosphoribosyl)-5-[(5-phosphoribosylamino)methylideneamino] imidazole-4-carboxamide isomerase from Campylobacter concisus (strain 13826).